The chain runs to 463 residues: L-seryl-tRNA(Sec) selenium transferase (463 aa).

Lys295 carries the N6-(pyridoxal phosphate)lysine modification.

Belongs to the SelA family. Homodecamer; pentamer of dimers. Binds only one seryl-tRNA(Sec) per dimer. The cofactor is pyridoxal 5'-phosphate.

It is found in the cytoplasm. It carries out the reaction L-seryl-tRNA(Sec) + selenophosphate + H(+) = L-selenocysteinyl-tRNA(Sec) + phosphate. It participates in aminoacyl-tRNA biosynthesis; selenocysteinyl-tRNA(Sec) biosynthesis; selenocysteinyl-tRNA(Sec) from L-seryl-tRNA(Sec) (bacterial route): step 1/1. Functionally, converts seryl-tRNA(Sec) to selenocysteinyl-tRNA(Sec) required for selenoprotein biosynthesis. This is L-seryl-tRNA(Sec) selenium transferase from Escherichia coli O7:K1 (strain IAI39 / ExPEC).